Here is a 397-residue protein sequence, read N- to C-terminus: Small ribosomal subunit protein mS29 (397 aa).

Residues 1 to 17 (MLKGMTRLVSRVHKLDP) constitute a mitochondrion transit peptide. Lys174 and Lys206 each carry N6-acetyllysine.

Belongs to the mitochondrion-specific ribosomal protein mS29 family. In terms of assembly, component of the mitochondrial ribosome small subunit (28S) which comprises a 12S rRNA and about 30 distinct proteins. Interacts with DELE1. Interacts with NOA1.

It localises to the mitochondrion. The enzyme catalyses GTP + H2O = GDP + phosphate + H(+). Its function is as follows. As a component of the mitochondrial small ribosomal subunit, it plays a role in the translation of mitochondrial mRNAs. Involved in mediating interferon-gamma-induced cell death. Displays GTPase activity in vitro. The chain is Small ribosomal subunit protein mS29 from Bos taurus (Bovine).